The sequence spans 160 residues: Large ribosomal subunit protein uL16 (160 aa).

The interval 138 to 160 (KNLEAPSQEKTKNSKKSQEEVKQ) is disordered.

The protein belongs to the universal ribosomal protein uL16 family. In terms of assembly, part of the 50S ribosomal subunit.

Its function is as follows. Binds 23S rRNA and is also seen to make contacts with the A and possibly P site tRNAs. This is Large ribosomal subunit protein uL16 from Prochlorococcus marinus (strain MIT 9215).